The chain runs to 91 residues: Lipolysis-activating peptide 1-alpha chain (91 aa).

The N-terminal stretch at 1–21 is a signal peptide; it reads MNIKLFCFLSILISLTGLSLS. The LCN-type CS-alpha/beta domain maps to 23-87; it reads DDGNYPIDAN…FFDAYKTYCK (65 aa). Disulfide bonds link C38-C61, C47-C66, and C51-C68.

Belongs to the long (3 C-C) scorpion toxin superfamily. As to quaternary structure, heterodimer of this alpha chain and a beta chain (AC D9U2A2). As to expression, expressed by the venom gland.

It localises to the secreted. In terms of biological role, the heterodimer LVP1 induces lipolysis in rat adipocytes. Induction of lipolysis by LVP1 appears to be mediated through the beta-2 adrenergic receptor pathway (ADRB2). The protein is Lipolysis-activating peptide 1-alpha chain of Lychas mucronatus (Chinese swimming scorpion).